We begin with the raw amino-acid sequence, 1293 residues long: Cilia- and flagella-associated protein 57 A (1293 aa).

Residues 72–113 (PGTKGITCMTLSPSKRLLAWSEDCDSGIIVVFDLIKLDKLEK) form a WD 1 repeat. Positions 117–143 (QNYQEPSDKDKLDKQAEKDRRDRFEKE) are disordered. The segment covering 122-143 (PSDKDKLDKQAEKDRRDRFEKE) has biased composition (basic and acidic residues). WD repeat units lie at residues 309–348 (PKNEQFAIQCIQPYSKGFLVGGKECTILFYEKDVDLKNPY), 359–398 (DMKAMITSLLLTPNEEKLIVGVDSGQLLQVPFTSDSMQLN), 411–450 (FHSDKITGLDVCIRKSLVATCSVDKTVRIWNYSDNQLENS), 535–574 (RGSGKVRTIFWEEDDQGFYTGSTDGLVIYWRVDDNGPQKT), and 700–739 (SHFGPITRMRISFKDNYIFTAGEDGALIIYENKEKEYQVK). Coiled coils occupy residues 756 to 1016 (RDQY…REKT), 1045 to 1079 (IKELKRDIGPKEEEIAKMKEQIANMNSEILHFKRT), and 1209 to 1285 (INHL…QIQN).

The protein belongs to the CFAP57 family. As to quaternary structure, forms a heterodimer with CFAP57C. Associates with components of the nexin-dynein regulatory complex (N-DRC) and the CFAP184:CFAP263 complex.

The protein resides in the cell projection. It localises to the cilium. In terms of biological role, associates with components of the nexin-dynein regulatory complex (N-DRC), a key regulator of ciliary/flagellar motility, and might act as an inner dynein arm (IDA) hub or linkage. This chain is Cilia- and flagella-associated protein 57 A (CFAP57A), found in Tetrahymena thermophila (strain SB210).